The sequence spans 307 residues: 2-dehydropantoate 2-reductase (307 aa).

Residues G7–G12, N102, and A128 contribute to the NADP(+) site. N102 contributes to the substrate binding site. K184 functions as the Proton donor in the catalytic mechanism. Positions 188, 192, and 255 each coordinate substrate. E268 serves as a coordination point for NADP(+).

The protein belongs to the ketopantoate reductase family.

It is found in the cytoplasm. It carries out the reaction (R)-pantoate + NADP(+) = 2-dehydropantoate + NADPH + H(+). It participates in cofactor biosynthesis; (R)-pantothenate biosynthesis; (R)-pantoate from 3-methyl-2-oxobutanoate: step 2/2. Catalyzes the NADPH-dependent reduction of ketopantoate into pantoic acid. The sequence is that of 2-dehydropantoate 2-reductase (apbA) from Streptococcus pyogenes serotype M1.